Reading from the N-terminus, the 817-residue chain is Actin filament-associated protein 1-like 2 (817 aa).

At Y56 the chain carries Phosphotyrosine. The interval 63–164 is disordered; that stretch reads HKQQNAESQD…KGKSAPHQWP (102 aa). The segment covering 123–139 has biased composition (acidic residues); that stretch reads YYEEAEPYDTSLNEDGE. 2 PH domains span residues 175–271 and 353–447; these read DARI…EVSG and SLET…SESG. S408 carries the post-translational modification Phosphoserine. Y413 carries the post-translational modification Phosphotyrosine. A Phosphoserine modification is found at S484. Residues 512–528 show a composition bias toward low complexity; that stretch reads TTAGEAPEEATPATDAP. 2 disordered regions span residues 512-657 and 754-786; these read TTAG…KLGK and GTTV…VNSA. A coiled-coil region spans residues 652-748; it reads EIKLGKNRTE…VKDSLRKAEA (97 aa). The segment covering 754-763 has biased composition (polar residues); it reads GTTVDTTHLE. Over residues 767-782 the composition is skewed to low complexity; the sequence is PRPKAATPTPAPDCTP.

In terms of assembly, interacts with SRC. Interacts with LCK when tyrosine phosphorylated. In terms of processing, tyrosine phosphorylated (by SRC).

Its subcellular location is the cytoplasm. In terms of biological role, may play a role in a signaling cascade by enhancing the kinase activity of SRC. Contributes to SRC-regulated transcription activation. This chain is Actin filament-associated protein 1-like 2 (AFAP1L2), found in Bos taurus (Bovine).